The sequence spans 225 residues: Agamous-like MADS-box protein TM6 (225 aa).

An MADS-box domain is found at 1 to 61 (MGRGKIEIKR…GKFHEYTSPT (61 aa)). The 91-residue stretch at 84–174 (YERMQENLRK…LLNFEAKCDD (91 aa)) folds into the K-box domain.

Expressed during flower development in stamens, petals and carpels. Expressed in fruits and seeds.

The protein localises to the nucleus. In terms of biological role, probable transcription factor involved in flower development. In Vitis vinifera (Grape), this protein is Agamous-like MADS-box protein TM6.